Reading from the N-terminus, the 112-residue chain is UPF0145 protein LAF_1635 (112 aa).

It belongs to the UPF0145 family.

The sequence is that of UPF0145 protein LAF_1635 from Limosilactobacillus fermentum (strain NBRC 3956 / LMG 18251) (Lactobacillus fermentum).